The primary structure comprises 580 residues: MHLSAVLNALLVSVLAAVLWKHVRLREHAAALEEEVAAGRQAPAPGPAPRADYARALQLLSEGGTHMVCTGRTHTDRVCRFKWLCYSNEAEEFIFFHGNASVMLPNLGSRRFQPALLDLSTVEDHNTQYFNFVELPAAALRFLPKPVFVPDVALVANRFNPDNLMHVFHDDLLPLFYTLRQFPGLAHEARLFFMEGWSEGAHFDLYKLLSPKQPLLRAQLKTLGRLLCFSHAFVGLSKVTTWYQYGFVQPQGPKANILVSGNEIRQFARFMMEKLNVSQAGAPLGEEYILVFSRTQNRLILNEAELLLALAQEFQMKTVTVSLEDQAFADVVRLVSNASMLVSVHGAQLVTALFLPRGATVVELFPYAVNPDHYTPYKTLATLPGMDLQYVAWRNMMPENTVTHPERPWDQGGIAHLDRAEQARILQSREVPRHLCCRNPEWLFRIYQDTKVDIPSLIQTVRRVVKGRPGPRKQKWTVGLYPGKVREARCQASVQGASEARLTVSWQIPWNLKYLKVREVKYEVWLQEQGENTYVPYILALQNHTFTENIKPFTTYLVWVRCIFNKTLLGPFADVLVCNT.

The Cytoplasmic segment spans residues 1–4 (MHLS). Residues 5–25 (AVLNALLVSVLAAVLWKHVRL) traverse the membrane as a helical; Signal-anchor for type II membrane protein segment. Residues 26 to 580 (REHAAALEEE…PFADVLVCNT (555 aa)) lie on the Lumenal side of the membrane. N-linked (GlcNAc...) asparagine glycans are attached at residues Asn99 and Asn276. The region spanning 488–580 (ARCQASVQGA…PFADVLVCNT (93 aa)) is the Fibronectin type-III domain.

Belongs to the glycosyltransferase 61 family.

It localises to the endoplasmic reticulum membrane. It carries out the reaction 3-O-(alpha-D-mannosyl)-L-threonyl-[protein] + UDP-N-acetyl-alpha-D-glucosamine = 3-O-(N-acetyl-beta-D-glucosaminyl-(1-&gt;4)-alpha-D-mannosyl)-L-threonyl-[protein] + UDP + H(+). It functions in the pathway protein modification; protein glycosylation. In terms of biological role, O-linked mannose beta-1,4-N-acetylglucosaminyltransferase that transfers UDP-N-acetyl-D-glucosamine to the 4-position of the mannose to generate N-acetyl-D-glucosamine-beta-1,4-O-D-mannosylprotein. Involved in the biosynthesis of the phosphorylated O-mannosyl trisaccharide (N-acetylgalactosamine-beta-3-N-acetylglucosamine-beta-4-(phosphate-6-)mannose), a carbohydrate structure present in alpha-dystroglycan (DAG1), which is required for binding laminin G-like domain-containing extracellular proteins with high affinity. This Canis lupus familiaris (Dog) protein is Protein O-linked-mannose beta-1,4-N-acetylglucosaminyltransferase 2 (POMGNT2).